The following is a 133-amino-acid chain: ATP synthase epsilon chain, chloroplastic (133 aa).

It belongs to the ATPase epsilon chain family. In terms of assembly, F-type ATPases have 2 components, CF(1) - the catalytic core - and CF(0) - the membrane proton channel. CF(1) has five subunits: alpha(3), beta(3), gamma(1), delta(1), epsilon(1). CF(0) has three main subunits: a, b and c.

The protein resides in the plastid. The protein localises to the chloroplast thylakoid membrane. Functionally, produces ATP from ADP in the presence of a proton gradient across the membrane. The sequence is that of ATP synthase epsilon chain, chloroplastic from Psilotum nudum (Whisk fern).